The chain runs to 174 residues: CDP-archaeol synthase (174 aa).

5 consecutive transmembrane segments (helical) span residues 14-34 (ILEAIILMLPAMIANATPVVA), 59-79 (IEGLLAGFAAGSAAGVLAALA), 83-103 (MLLAVHSPAIALGALAGDMAG), 118-138 (APLLDQLDFYLGALAVSIALG), and 149-169 (AAAAVLLLHLAANITAYLLGL).

The protein belongs to the CDP-archaeol synthase family. Mg(2+) serves as cofactor.

It localises to the cell membrane. The catalysed reaction is 2,3-bis-O-(geranylgeranyl)-sn-glycerol 1-phosphate + CTP + H(+) = CDP-2,3-bis-O-(geranylgeranyl)-sn-glycerol + diphosphate. Its pathway is membrane lipid metabolism; glycerophospholipid metabolism. Its function is as follows. Catalyzes the formation of CDP-2,3-bis-(O-geranylgeranyl)-sn-glycerol (CDP-archaeol) from 2,3-bis-(O-geranylgeranyl)-sn-glycerol 1-phosphate (DGGGP) and CTP. This reaction is the third ether-bond-formation step in the biosynthesis of archaeal membrane lipids. In Aeropyrum pernix (strain ATCC 700893 / DSM 11879 / JCM 9820 / NBRC 100138 / K1), this protein is CDP-archaeol synthase.